The chain runs to 95 residues: MAFKFNAEVRTAQGKGASRRLRHNGQIPAIVYGGSEEPVSIILNHDELNNAQAHESFYSEVITLVVEGKEVAVKVQAMQRHPFKPKLVHIDFKRA.

It belongs to the bacterial ribosomal protein bL25 family. Part of the 50S ribosomal subunit; part of the 5S rRNA/L5/L18/L25 subcomplex. Contacts the 5S rRNA. Binds to the 5S rRNA independently of L5 and L18.

In terms of biological role, this is one of the proteins that binds to the 5S RNA in the ribosome where it forms part of the central protuberance. In Haemophilus influenzae (strain ATCC 51907 / DSM 11121 / KW20 / Rd), this protein is Large ribosomal subunit protein bL25.